Here is a 447-residue protein sequence, read N- to C-terminus: Phosphoglucosamine mutase (447 aa).

The active-site Phosphoserine intermediate is the Ser-100. Mg(2+) is bound by residues Ser-100, Asp-239, Asp-241, and Asp-243. Phosphoserine is present on Ser-100.

It belongs to the phosphohexose mutase family. The cofactor is Mg(2+). In terms of processing, activated by phosphorylation.

The enzyme catalyses alpha-D-glucosamine 1-phosphate = D-glucosamine 6-phosphate. Its function is as follows. Catalyzes the conversion of glucosamine-6-phosphate to glucosamine-1-phosphate. This Halalkalibacterium halodurans (strain ATCC BAA-125 / DSM 18197 / FERM 7344 / JCM 9153 / C-125) (Bacillus halodurans) protein is Phosphoglucosamine mutase.